We begin with the raw amino-acid sequence, 380 residues long: MKNEMLALILAGGQGTRLGKLTQSIAKPAVQFGGRYRIIDFALSNCANSGIHNVGVVTQYQPLALNNHIGNGSSWGLDGINSGVSILQPYSASEGNRWFEGTSHAIYQNIDYIDSVNPEYVLILSGDHIYKMDYDDMLQSHKDNNASLTVAVLDVPLKEASRFGIMNTDANNRIVEFEEKPAQPKSTKASMGIYIFDWQRLRNMLVAAEKSKVGMSDFGKNVIPNYLESGESVYAYEFSGYWKDVGTIESLWEANMEYISPENALDSRNRQWKIYSRNLISPPNFLGANAHVEDSLVVDGCFVDGTVKHSILSTGAQVREGAEVLDSVIMSGAIIGQGAKIKRAIIGEGAIISDGVEIDGTDEVQVVGYNEVVGVATDED.

Residues Gly164, 179 to 180 (EK), and Ser190 contribute to the alpha-D-glucose 1-phosphate site.

The protein belongs to the bacterial/plant glucose-1-phosphate adenylyltransferase family. As to quaternary structure, homotetramer.

It catalyses the reaction alpha-D-glucose 1-phosphate + ATP + H(+) = ADP-alpha-D-glucose + diphosphate. It functions in the pathway glycan biosynthesis; glycogen biosynthesis. Its function is as follows. Involved in the biosynthesis of ADP-glucose, a building block required for the elongation reactions to produce glycogen. Catalyzes the reaction between ATP and alpha-D-glucose 1-phosphate (G1P) to produce pyrophosphate and ADP-Glc. The chain is Glucose-1-phosphate adenylyltransferase from Streptococcus pneumoniae (strain Hungary19A-6).